The sequence spans 92 residues: Large ribosomal subunit protein eL43 (92 aa).

The C4-type zinc finger occupies 39-60; it reads CSFCGKDSMKRAVVGIWSCKRC.

Belongs to the eukaryotic ribosomal protein eL43 family.

The polypeptide is Large ribosomal subunit protein eL43 (RpL37A) (Drosophila melanogaster (Fruit fly)).